The primary structure comprises 205 residues: MANLEIIDQKGKSAGNVDLNEEIFGIEPNESVVFDAIIRQRAGKRQGTSAVKNRSAVRGGGKKPWRQKGTGRARQGSIRAPQWRGGGTVFGPTPRSYKMDMPRKARRLAMKSVLSQKVADNDLIILDQLTLEAPKTKELKAILDNANVSGKVLVVSDDKNVQLSGKNLPKVKVVPVNGLNVVDAVDYQKLVLTQDAIKRIEEVLA.

The interval 45–97 (RQGTSAVKNRSAVRGGGKKPWRQKGTGRARQGSIRAPQWRGGGTVFGPTPRSY) is disordered. Residues 60-71 (GGKKPWRQKGTG) show a composition bias toward basic residues.

This sequence belongs to the universal ribosomal protein uL4 family. As to quaternary structure, part of the 50S ribosomal subunit.

In terms of biological role, one of the primary rRNA binding proteins, this protein initially binds near the 5'-end of the 23S rRNA. It is important during the early stages of 50S assembly. It makes multiple contacts with different domains of the 23S rRNA in the assembled 50S subunit and ribosome. Functionally, forms part of the polypeptide exit tunnel. This chain is Large ribosomal subunit protein uL4, found in Lactobacillus johnsonii (strain CNCM I-12250 / La1 / NCC 533).